A 542-amino-acid chain; its full sequence is Chaperonin GroEL (542 aa).

ATP is bound by residues 29-32, Lys-50, 86-90, Gly-415, and Asp-495; these read TLGP and DGTTT.

Belongs to the chaperonin (HSP60) family. In terms of assembly, forms a cylinder of 14 subunits composed of two heptameric rings stacked back-to-back. Interacts with the co-chaperonin GroES.

Its subcellular location is the cytoplasm. It catalyses the reaction ATP + H2O + a folded polypeptide = ADP + phosphate + an unfolded polypeptide.. Its function is as follows. Together with its co-chaperonin GroES, plays an essential role in assisting protein folding. The GroEL-GroES system forms a nano-cage that allows encapsulation of the non-native substrate proteins and provides a physical environment optimized to promote and accelerate protein folding. The sequence is that of Chaperonin GroEL from Flavobacterium psychrophilum (strain ATCC 49511 / DSM 21280 / CIP 103535 / JIP02/86).